We begin with the raw amino-acid sequence, 226 residues long: 7-carboxy-7-deazaguanine synthase (226 aa).

Substrate-binding positions include 10–12 (LQG) and R25. Residues 16-221 (YTGIPCIFVR…LQTHKFIWTP (206 aa)) form the Radical SAM core domain. 3 residues coordinate [4Fe-4S] cluster: C29, C33, and C36. S38 serves as a coordination point for Mg(2+). Position 69 (T69) interacts with substrate. Residue G71 coordinates S-adenosyl-L-methionine.

This sequence belongs to the radical SAM superfamily. 7-carboxy-7-deazaguanine synthase family. In terms of assembly, homodimer. [4Fe-4S] cluster serves as cofactor. S-adenosyl-L-methionine is required as a cofactor. It depends on Mg(2+) as a cofactor.

It carries out the reaction 6-carboxy-5,6,7,8-tetrahydropterin + H(+) = 7-carboxy-7-deazaguanine + NH4(+). It participates in purine metabolism; 7-cyano-7-deazaguanine biosynthesis. Its function is as follows. Catalyzes the complex heterocyclic radical-mediated conversion of 6-carboxy-5,6,7,8-tetrahydropterin (CPH4) to 7-carboxy-7-deazaguanine (CDG), a step common to the biosynthetic pathways of all 7-deazapurine-containing compounds. The protein is 7-carboxy-7-deazaguanine synthase of Koribacter versatilis (strain Ellin345).